The primary structure comprises 518 residues: Glutamate--cysteine ligase (518 aa).

This sequence belongs to the glutamate--cysteine ligase type 1 family. Type 1 subfamily.

It catalyses the reaction L-cysteine + L-glutamate + ATP = gamma-L-glutamyl-L-cysteine + ADP + phosphate + H(+). The protein operates within sulfur metabolism; glutathione biosynthesis; glutathione from L-cysteine and L-glutamate: step 1/2. This is Glutamate--cysteine ligase from Shigella boydii serotype 18 (strain CDC 3083-94 / BS512).